Consider the following 161-residue polypeptide: Peptidyl-prolyl cis-trans isomerase (161 aa).

Residues 6-160 (FFDIKAGDER…KKIIIEDCGE (155 aa)) enclose the PPIase cyclophilin-type domain.

The protein belongs to the cyclophilin-type PPIase family. PPIase A subfamily. In terms of tissue distribution, found mainly in the tegument, gut epithelium, and muscle layers. Also found in the interior of the parasite.

The catalysed reaction is [protein]-peptidylproline (omega=180) = [protein]-peptidylproline (omega=0). Its activity is regulated as follows. Binds cyclosporin A (CsA). CsA mediates some of its effects via an inhibitory action on PPIase. Functionally, PPIases accelerate the folding of proteins. It catalyzes the cis-trans isomerization of proline imidic peptide bonds in oligopeptides. The sequence is that of Peptidyl-prolyl cis-trans isomerase from Schistosoma mansoni (Blood fluke).